Consider the following 994-residue polypeptide: Phosphoenolpyruvate carboxylase (994 aa).

The tract at residues 1–66 (MKSSGSARAT…QGRTREDKDR (66 aa)) is disordered. Composition is skewed to low complexity over residues 14–25 (AVSSSSAPAHAE) and 41–54 (AAARPLAPTNAASA). Catalysis depends on residues His204 and Lys646.

Belongs to the PEPCase type 1 family. Mg(2+) serves as cofactor.

It catalyses the reaction oxaloacetate + phosphate = phosphoenolpyruvate + hydrogencarbonate. Functionally, forms oxaloacetate, a four-carbon dicarboxylic acid source for the tricarboxylic acid cycle. The polypeptide is Phosphoenolpyruvate carboxylase (Burkholderia mallei (strain NCTC 10247)).